The primary structure comprises 376 residues: Meiotically up-regulated gene 183 protein (376 aa).

A disordered region spans residues 334–376 (SLENVDDMDDIDVKEPLFSDNDEDVENSDSEDGSESIGSEDEE). The segment covering 353 to 376 (DNDEDVENSDSEDGSESIGSEDEE) has biased composition (acidic residues).

Belongs to the RTT106 family.

In terms of biological role, has a role in meiosis. In Schizosaccharomyces pombe (strain 972 / ATCC 24843) (Fission yeast), this protein is Meiotically up-regulated gene 183 protein (mug183).